The following is a 921-amino-acid chain: MEYKNTLLMPKTEFPMRGNLPKREPAMQEKWAEMNIYEKVQEHTKGRPLFVLHDGPPYANGDIHMGHALNKVLKDFIVRYKSMTGFSAPYVPGWDTHGLPIEQALTNKGVKRKEMTVAEFRKLCAEYAYEQVERQREQFKRLGVRADWDNPYITLEPAYEAQQIKVFGDMAKKGYIYKGQKPVYWSPTSESALAEAEIEYQDKKSASIYVAFPVKDGKNVLEGDEKYIIWTTTPWTLPANLGISVHPELEYSIVKVNDEKYIIASELFETVAKTLEWENAEVVKTVKGSELEYTVAKHPFYDRDSLVMLGDHVTTDAGTGCVHTAPGHGEDDFVVGKKYGLEVLCPVDDKGVLTNEAPGFEGLFYDKANKPITEKLEEVGALLKLTFITHSYPHDWRTKKPIIFRATAQWFASIEAFRKELIEAVAETKWVPAWGETRLHNMVRDRGDWCISRQRAWGVPIPVFYAENGDPIITDETINHVADLFREHGSNVWFEREAKDLLPEGFTHPGSPNGEFRKETDIMDVWFDSGSSHQAVLEEREDLQRPADLYLEGSDQYRGWFNSSLSTAVAVTGKAPYKGVLSHGFVLDGEGRKMSKSIGNIVVPKKIMDQLGGDILRLWVSSVDYQSDVRISDDILKQVAEVYRKIRNTFRFLLGNLDDFKPSENAVAVAELREVDRYMLVKLNDLITKVKEAYETYDFAAVYHAIHNFCTIDLSSFYLDFAKDILYIEGANHEDRRAIQTVLYDVLVALTKLVTPILPHTADEVWPYIPGVTEESVQLTDMPEAVQLYDAEALKTKWDAFMTLRDDVLKALEVARNEKVIGKSLNASITLYPTAEMKAMLESISEDLKQLFIVSEYKLGGMMEEAPADAPKYEHTAVVVAQATGETCERCWVVSETIGKDAEHETLCERCATVVKENYVK.

The 'HIGH' region signature appears at 57–67; that stretch reads PYANGDIHMGH. E552 is a binding site for L-isoleucyl-5'-AMP. The 'KMSKS' region motif lies at 593-597; the sequence is KMSKS. K596 serves as a coordination point for ATP. 4 residues coordinate Zn(2+): C888, C891, C908, and C911.

This sequence belongs to the class-I aminoacyl-tRNA synthetase family. IleS type 1 subfamily. Monomer. Requires Zn(2+) as cofactor.

It localises to the cytoplasm. It catalyses the reaction tRNA(Ile) + L-isoleucine + ATP = L-isoleucyl-tRNA(Ile) + AMP + diphosphate. Its function is as follows. Catalyzes the attachment of isoleucine to tRNA(Ile). As IleRS can inadvertently accommodate and process structurally similar amino acids such as valine, to avoid such errors it has two additional distinct tRNA(Ile)-dependent editing activities. One activity is designated as 'pretransfer' editing and involves the hydrolysis of activated Val-AMP. The other activity is designated 'posttransfer' editing and involves deacylation of mischarged Val-tRNA(Ile). The protein is Isoleucine--tRNA ligase of Bacillus cereus (strain G9842).